Reading from the N-terminus, the 536-residue chain is CTP synthase (536 aa).

An amidoligase domain region spans residues 1 to 267; the sequence is MSKFVFVTGG…CKETLKYLEL (267 aa). Ser13 contributes to the CTP binding site. A UTP-binding site is contributed by Ser13. ATP contacts are provided by residues 14 to 19 and Asp71; that span reads SIGKGI. Mg(2+)-binding residues include Asp71 and Glu141. CTP-binding positions include 148 to 150, 188 to 193, and Lys224; these read DIE and KTKPTQ. UTP-binding positions include 188–193 and Lys224; that span reads KTKPTQ. The Glutamine amidotransferase type-1 domain maps to 292–534; it reads KVALVGKYIE…IKSSQENLTQ (243 aa). Gly354 lines the L-glutamine pocket. Cys381 acts as the Nucleophile; for glutamine hydrolysis in catalysis. L-glutamine is bound by residues 382–385, Glu405, and Arg462; that span reads LGMQ. Residues His507 and Glu509 contribute to the active site.

Belongs to the CTP synthase family. In terms of assembly, homotetramer.

It carries out the reaction UTP + L-glutamine + ATP + H2O = CTP + L-glutamate + ADP + phosphate + 2 H(+). It catalyses the reaction L-glutamine + H2O = L-glutamate + NH4(+). The enzyme catalyses UTP + NH4(+) + ATP = CTP + ADP + phosphate + 2 H(+). It functions in the pathway pyrimidine metabolism; CTP biosynthesis via de novo pathway; CTP from UDP: step 2/2. Its activity is regulated as follows. Allosterically activated by GTP, when glutamine is the substrate; GTP has no effect on the reaction when ammonia is the substrate. The allosteric effector GTP functions by stabilizing the protein conformation that binds the tetrahedral intermediate(s) formed during glutamine hydrolysis. Inhibited by the product CTP, via allosteric rather than competitive inhibition. Its function is as follows. Catalyzes the ATP-dependent amination of UTP to CTP with either L-glutamine or ammonia as the source of nitrogen. Regulates intracellular CTP levels through interactions with the four ribonucleotide triphosphates. The sequence is that of CTP synthase from Prochlorococcus marinus (strain MIT 9312).